The sequence spans 391 residues: Casein kinase II subunit alpha (391 aa).

The interval 36–41 is interaction with beta subunit; the sequence is QDDYQL. The Protein kinase domain occupies 39-324; that stretch reads YQLVRKLGRG…AREAMEHPYF (286 aa). ATP is bound by residues 45–53 and K68; that span reads LGRGKYSEV. The Proton acceptor role is filled by D156. A compositionally biased stretch (polar residues) spans 335–346; sequence GSSNMPGGSTPV. The tract at residues 335 to 363 is disordered; it reads GSSNMPGGSTPVSSASMMSGISSVPTPSP. The span at 347–357 shows a compositional bias: low complexity; sequence SSASMMSGISS.

The protein belongs to the protein kinase superfamily. Ser/Thr protein kinase family. CK2 subfamily. Tetramer composed of an alpha chain, an alpha' and two beta chains. Interacts with RNPS1.

Its subcellular location is the nucleus. It catalyses the reaction L-seryl-[protein] + ATP = O-phospho-L-seryl-[protein] + ADP + H(+). The catalysed reaction is L-threonyl-[protein] + ATP = O-phospho-L-threonyl-[protein] + ADP + H(+). In terms of biological role, catalytic subunit of a constitutively active serine/threonine-protein kinase complex that phosphorylates a large number of substrates containing acidic residues C-terminal to the phosphorylated serine or threonine. Regulates numerous cellular processes, such as cell cycle progression, apoptosis and transcription, as well as viral infection. May act as a regulatory node which integrates and coordinates numerous signals leading to an appropriate cellular response. During mitosis, functions as a component of the p53/TP53-dependent spindle assembly checkpoint (SAC) that maintains cyclin-B-CDK1 activity and G2 arrest in response to spindle damage. Can also negatively regulate apoptosis. Phosphorylates the caspases CASP9 and CASP2 and the apoptotic regulator NOL3. Phosphorylation protects CASP9 from cleavage and activation by CASP8, and inhibits the dimerization of CASP2 and activation of CASP8. Plays an important role in the circadian clock function by phosphorylating BMAL1. This chain is Casein kinase II subunit alpha (CSNK2A1), found in Gallus gallus (Chicken).